Here is a 400-residue protein sequence, read N- to C-terminus: CCA-adding enzyme (400 aa).

ATP is bound by residues Gly28 and Arg31. CTP contacts are provided by Gly28 and Arg31. The Mg(2+) site is built by Asp41 and Asp43. Residues Arg112, Asp155, Arg158, Arg161, and Arg164 each coordinate ATP. CTP contacts are provided by Arg112, Asp155, Arg158, Arg161, and Arg164.

Belongs to the tRNA nucleotidyltransferase/poly(A) polymerase family. Bacterial CCA-adding enzyme type 3 subfamily. As to quaternary structure, homodimer. The cofactor is Mg(2+).

The catalysed reaction is a tRNA precursor + 2 CTP + ATP = a tRNA with a 3' CCA end + 3 diphosphate. The enzyme catalyses a tRNA with a 3' CCA end + 2 CTP + ATP = a tRNA with a 3' CCACCA end + 3 diphosphate. In terms of biological role, catalyzes the addition and repair of the essential 3'-terminal CCA sequence in tRNAs without using a nucleic acid template. Adds these three nucleotides in the order of C, C, and A to the tRNA nucleotide-73, using CTP and ATP as substrates and producing inorganic pyrophosphate. tRNA 3'-terminal CCA addition is required both for tRNA processing and repair. Also involved in tRNA surveillance by mediating tandem CCA addition to generate a CCACCA at the 3' terminus of unstable tRNAs. While stable tRNAs receive only 3'-terminal CCA, unstable tRNAs are marked with CCACCA and rapidly degraded. The sequence is that of CCA-adding enzyme from Staphylococcus aureus (strain MRSA252).